A 608-amino-acid chain; its full sequence is Cilia- and flagella-associated protein 100 (608 aa).

Polar residues predominate over residues 1–17 (MSETLSNIVSKNMTNDK). The tract at residues 1-57 (MSETLSNIVSKNMTNDKNSLESMNISSSSSAEENPKKQAKKXKERGPDPSANPFHLS) is disordered. Low complexity predominate over residues 20–32 (LESMNISSSSSAE). Coiled coils occupy residues 164 to 196 (TLDCKRREIQRLETLATKEEARLQQAEKSLAKD) and 230 to 257 (LEIRDLTTQIVNIKSEISRFEDTLQHYK). Disordered regions lie at residues 291–320 (ASKDGSVNSTPGDKGPGIKGKASSVWAKEG) and 339–377 (LSSPQQGSQPSESSGGNSRGSNSPIPLTQEDTDSDGEEP). Positions 339–361 (LSSPQQGSQPSESSGGNSRGSNS) are enriched in low complexity. 2 coiled-coil regions span residues 385 to 435 (QQLL…QLKQ) and 500 to 575 (TVQM…RGRT).

This sequence belongs to the CFAP100 family.

Its subcellular location is the cytoplasm. It is found in the cytoskeleton. The protein localises to the cilium axoneme. May play a role in ciliary/flagellar motility by regulating the assembly and the activity of axonemal inner dynein arm. This chain is Cilia- and flagella-associated protein 100, found in Macaca fascicularis (Crab-eating macaque).